We begin with the raw amino-acid sequence, 423 residues long: 26S proteasome regulatory subunit 6A homolog (423 aa).

211-218 (GPPGTGKT) contacts ATP.

This sequence belongs to the AAA ATPase family.

The protein resides in the cytoplasm. It is found in the nucleus. Functionally, the 26S proteasome is involved in the ATP-dependent degradation of ubiquitinated proteins. The regulatory (or ATPase) complex confers ATP dependency and substrate specificity to the 26S complex. This Solanum lycopersicum (Tomato) protein is 26S proteasome regulatory subunit 6A homolog (TBP1).